The chain runs to 447 residues: Glycerol-3-phosphate acyltransferase ATS11, chloroplastic (447 aa).

The interval Met-1–Val-21 is disordered. The transit peptide at Met-1–Ser-48 directs the protein to the chloroplast. The HXXXXD motif signature appears at His-217–Asp-222.

The protein belongs to the GPAT/DAPAT family.

Its subcellular location is the plastid. It localises to the chloroplast stroma. The catalysed reaction is a fatty acyl-[ACP] + sn-glycerol 3-phosphate = a 1-acyl-sn-glycero-3-phosphate + holo-[ACP]. It catalyses the reaction sn-glycerol 3-phosphate + an acyl-CoA = a 1-acyl-sn-glycero-3-phosphate + CoA. It functions in the pathway phospholipid metabolism; CDP-diacylglycerol biosynthesis; CDP-diacylglycerol from sn-glycerol 3-phosphate: step 1/3. Esterifies the acyl-group from acyl-acyl carrier proteins (acyl-ACPs) to the sn-1 position of glycerol-3-phosphate. The physiological acyl donors in chloroplasts are acyl-ACPs, but acyl-CoAs are used as artificial donor for in vitro reactions. The enzyme from chilling-resistant plants discriminates against non-fluid palmitic acid and selects oleic acid whereas the enzyme from sensitive plants accepts both fatty acids. Squash is chilling-sensitive. Preferably utilizes oleoyl groups (18:1-ACP) and has lower affinity to palmitoyl (16:0-ACP) and stearoyl groups (18:0-ACP). This is Glycerol-3-phosphate acyltransferase ATS11, chloroplastic from Cucurbita moschata (Winter crookneck squash).